A 453-amino-acid chain; its full sequence is Chromosomal replication initiator protein DnaA (453 aa).

The segment at 1–74 (MKEKQFWNRI…GFEIYDAEIT (74 aa)) is domain I, interacts with DnaA modulators. The segment at 74–113 (TPHYIFTKPQDTTSSQVEEATNLTLYDYSPKLVSIPYSDT) is domain II. Residues 114 to 331 (GLKEKYTFDN…GAINDITLIA (218 aa)) form a domain III, AAA+ region region. ATP contacts are provided by Gly158, Gly160, Lys161, and Thr162. Positions 332–453 (RVKKIKDITI…EIESIKKKIK (122 aa)) are domain IV, binds dsDNA.

It belongs to the DnaA family. Oligomerizes as a right-handed, spiral filament on DNA at oriC.

The protein localises to the cytoplasm. Functionally, plays an essential role in the initiation and regulation of chromosomal replication. ATP-DnaA binds to the origin of replication (oriC) to initiate formation of the DNA replication initiation complex once per cell cycle. Binds the DnaA box (a 9 base pair repeat at the origin) and separates the double-stranded (ds)DNA. Forms a right-handed helical filament on oriC DNA; dsDNA binds to the exterior of the filament while single-stranded (ss)DNA is stabiized in the filament's interior. The ATP-DnaA-oriC complex binds and stabilizes one strand of the AT-rich DNA unwinding element (DUE), permitting loading of DNA polymerase. After initiation quickly degrades to an ADP-DnaA complex that is not apt for DNA replication. Binds acidic phospholipids. This Streptococcus pneumoniae (strain P1031) protein is Chromosomal replication initiator protein DnaA.